A 355-amino-acid polypeptide reads, in one-letter code: MSSTQFDGDIDSFVSYLKSNRGLSANTLKAYRADLTACLHLFELRGVTDLNEITLDDLRSWMAVESRDHARSSMARKTVAVRGFFAWAYEHGLTATDPAATLMTPSIPSTLPAVLTESQAEQLLDVAEHAVATNQYKDDGGAAAASGSGKAAGKTADKSADTVNRSEAPARADKRDNARVTAESQRNAAILELLYATGIRVAELVSMDIADIDFSNRTIKVTGKGNKQRVVPFGLPAQRALETWLEQGRPVLARTATDAVKSRAANALFLGARGGRIDQRIARDIVHRAAREAGVPDISPHALRHSAATHILDGGADLREVQEMLGHSSLKTTQRYTHVSIEQLKNRYGQAFPRA.

Positions 4–89 constitute a Core-binding (CB) domain; that stretch reads TQFDGDIDSF…AVRGFFAWAY (86 aa). The disordered stretch occupies residues 138-180; it reads DDGGAAAASGSGKAAGKTADKSADTVNRSEAPARADKRDNARV. A compositionally biased stretch (low complexity) spans 141–154; the sequence is GAAAASGSGKAAGK. The Tyr recombinase domain maps to 158 to 349; the sequence is KSADTVNRSE…SIEQLKNRYG (192 aa). Basic and acidic residues predominate over residues 168 to 178; it reads APARADKRDNA. Catalysis depends on residues arginine 200, lysine 224, histidine 301, arginine 304, and histidine 327. Tyrosine 336 functions as the O-(3'-phospho-DNA)-tyrosine intermediate in the catalytic mechanism.

This sequence belongs to the 'phage' integrase family. XerC subfamily. As to quaternary structure, forms a cyclic heterotetrameric complex composed of two molecules of XerC and two molecules of XerD.

The protein resides in the cytoplasm. Functionally, site-specific tyrosine recombinase, which acts by catalyzing the cutting and rejoining of the recombining DNA molecules. The XerC-XerD complex is essential to convert dimers of the bacterial chromosome into monomers to permit their segregation at cell division. It also contributes to the segregational stability of plasmids. The sequence is that of Tyrosine recombinase XerC from Bifidobacterium longum subsp. infantis (strain ATCC 15697 / DSM 20088 / JCM 1222 / NCTC 11817 / S12).